Here is a 141-residue protein sequence, read N- to C-terminus: Nucleoside diphosphate kinase (141 aa).

Residues Lys11, Phe59, Arg87, Thr93, Arg104, and Asn114 each contribute to the ATP site. His117 (pros-phosphohistidine intermediate) is an active-site residue.

Belongs to the NDK family. Mg(2+) serves as cofactor.

Its subcellular location is the cytoplasm. It carries out the reaction a 2'-deoxyribonucleoside 5'-diphosphate + ATP = a 2'-deoxyribonucleoside 5'-triphosphate + ADP. The catalysed reaction is a ribonucleoside 5'-diphosphate + ATP = a ribonucleoside 5'-triphosphate + ADP. Its function is as follows. Major role in the synthesis of nucleoside triphosphates other than ATP. The ATP gamma phosphate is transferred to the NDP beta phosphate via a ping-pong mechanism, using a phosphorylated active-site intermediate. This chain is Nucleoside diphosphate kinase, found in Staphylothermus marinus (strain ATCC 43588 / DSM 3639 / JCM 9404 / F1).